The primary structure comprises 156 residues: Egg-lysin (156 aa).

The N-terminal stretch at 1–18 is a signal peptide; that stretch reads MKLLVLCVFAMMATLAVS.

Monomer. Homodimer. Molecules associate into dimers and then rapidly dissociate again. Interacts (as a monomer) with the egg vitelline layer protein VERL (via VERL repeats); each VERL chain can bind multiple copies of lysin. Sperm.

Its subcellular location is the cytoplasmic vesicle. The protein resides in the secretory vesicle. It localises to the acrosome lumen. Its function is as follows. Creates a 3 um hole in the egg vitelline layer through which the sperm passes. Does not have enzyme activity. Species-specific interaction between the sperm protein lysin and the egg protein VERL exposes a basic surface on lysin that may dissociate the egg vitelline layer via electrostatic repulsion. Plays a role in ensuring species-specific fertilization. The polypeptide is Egg-lysin (Haliotis cracherodii (Black abalone)).